A 256-amino-acid polypeptide reads, in one-letter code: Imidazole glycerol phosphate synthase subunit HisF (256 aa).

Active-site residues include D11 and D130.

It belongs to the HisA/HisF family. In terms of assembly, heterodimer of HisH and HisF.

It localises to the cytoplasm. It carries out the reaction 5-[(5-phospho-1-deoxy-D-ribulos-1-ylimino)methylamino]-1-(5-phospho-beta-D-ribosyl)imidazole-4-carboxamide + L-glutamine = D-erythro-1-(imidazol-4-yl)glycerol 3-phosphate + 5-amino-1-(5-phospho-beta-D-ribosyl)imidazole-4-carboxamide + L-glutamate + H(+). It participates in amino-acid biosynthesis; L-histidine biosynthesis; L-histidine from 5-phospho-alpha-D-ribose 1-diphosphate: step 5/9. Functionally, IGPS catalyzes the conversion of PRFAR and glutamine to IGP, AICAR and glutamate. The HisF subunit catalyzes the cyclization activity that produces IGP and AICAR from PRFAR using the ammonia provided by the HisH subunit. The sequence is that of Imidazole glycerol phosphate synthase subunit HisF from Cupriavidus necator (strain ATCC 17699 / DSM 428 / KCTC 22496 / NCIMB 10442 / H16 / Stanier 337) (Ralstonia eutropha).